A 755-amino-acid polypeptide reads, in one-letter code: Thermostable beta-glucosidase B (755 aa).

Asp231 is a catalytic residue.

This sequence belongs to the glycosyl hydrolase 3 family.

The enzyme catalyses Hydrolysis of terminal, non-reducing beta-D-glucosyl residues with release of beta-D-glucose.. It participates in glycan metabolism; cellulose degradation. This chain is Thermostable beta-glucosidase B (bglB), found in Acetivibrio thermocellus (strain ATCC 27405 / DSM 1237 / JCM 9322 / NBRC 103400 / NCIMB 10682 / NRRL B-4536 / VPI 7372) (Clostridium thermocellum).